Here is a 346-residue protein sequence, read N- to C-terminus: Phosphate acyltransferase (346 aa).

The protein belongs to the PlsX family. Homodimer. Probably interacts with PlsY.

Its subcellular location is the cytoplasm. The catalysed reaction is a fatty acyl-[ACP] + phosphate = an acyl phosphate + holo-[ACP]. Its pathway is lipid metabolism; phospholipid metabolism. In terms of biological role, catalyzes the reversible formation of acyl-phosphate (acyl-PO(4)) from acyl-[acyl-carrier-protein] (acyl-ACP). This enzyme utilizes acyl-ACP as fatty acyl donor, but not acyl-CoA. This Psychromonas ingrahamii (strain DSM 17664 / CCUG 51855 / 37) protein is Phosphate acyltransferase.